The primary structure comprises 119 residues: Large ribosomal subunit protein bL20c (119 aa).

This sequence belongs to the bacterial ribosomal protein bL20 family.

It localises to the plastid. The protein localises to the chloroplast. In terms of biological role, binds directly to 23S ribosomal RNA and is necessary for the in vitro assembly process of the 50S ribosomal subunit. It is not involved in the protein synthesizing functions of that subunit. This chain is Large ribosomal subunit protein bL20c, found in Saccharum hybrid (Sugarcane).